We begin with the raw amino-acid sequence, 286 residues long: 4-hydroxy-tetrahydrodipicolinate synthase 2 (286 aa).

Pyruvate is bound at residue threonine 45. Residue tyrosine 133 is the Proton donor/acceptor of the active site. Lysine 161 serves as the catalytic Schiff-base intermediate with substrate. Isoleucine 203 contributes to the pyruvate binding site.

The protein belongs to the DapA family. As to quaternary structure, homotetramer; dimer of dimers.

It localises to the cytoplasm. The enzyme catalyses L-aspartate 4-semialdehyde + pyruvate = (2S,4S)-4-hydroxy-2,3,4,5-tetrahydrodipicolinate + H2O + H(+). It participates in amino-acid biosynthesis; L-lysine biosynthesis via DAP pathway; (S)-tetrahydrodipicolinate from L-aspartate: step 3/4. Catalyzes the condensation of (S)-aspartate-beta-semialdehyde [(S)-ASA] and pyruvate to 4-hydroxy-tetrahydrodipicolinate (HTPA). The sequence is that of 4-hydroxy-tetrahydrodipicolinate synthase 2 from Clostridium acetobutylicum (strain ATCC 824 / DSM 792 / JCM 1419 / IAM 19013 / LMG 5710 / NBRC 13948 / NRRL B-527 / VKM B-1787 / 2291 / W).